The sequence spans 525 residues: GMP synthase [glutamine-hydrolyzing] (525 aa).

In terms of domain architecture, Glutamine amidotransferase type-1 spans 9-207; it reads RILILDFGSQ…VLGICGCEAL (199 aa). Residue Cys-86 is the Nucleophile of the active site. Active-site residues include His-181 and Glu-183. Positions 208 to 400 constitute a GMPS ATP-PPase domain; the sequence is WTSATIIEDA…LGLPYDMLYR (193 aa). Residue 235-241 coordinates ATP; the sequence is SGGVDSS.

As to quaternary structure, homodimer.

The catalysed reaction is XMP + L-glutamine + ATP + H2O = GMP + L-glutamate + AMP + diphosphate + 2 H(+). The protein operates within purine metabolism; GMP biosynthesis; GMP from XMP (L-Gln route): step 1/1. In terms of biological role, catalyzes the synthesis of GMP from XMP. The polypeptide is GMP synthase [glutamine-hydrolyzing] (Yersinia pseudotuberculosis serotype IB (strain PB1/+)).